The primary structure comprises 85 residues: MAHKKGVGSSRNGRDSDGQRLGCKKFGGEAVKAGNIIYRQHGTKIHPGNNVGLGKDYTLFALIEGVVKFERMGRDRKKVSVYPAN.

A disordered region spans residues methionine 1–leucine 21.

This sequence belongs to the bacterial ribosomal protein bL27 family.

The protein is Large ribosomal subunit protein bL27 of Geobacter sp. (strain M21).